Consider the following 137-residue polypeptide: Glycine cleavage system H protein (137 aa).

Residues 36–118 (PAIIGITEYA…YGEGWLLKVE (83 aa)) form the Lipoyl-binding domain. An N6-lipoyllysine modification is found at Lys-77.

This sequence belongs to the GcvH family. In terms of assembly, the glycine cleavage system is composed of four proteins: P, T, L and H. The cofactor is (R)-lipoate.

Functionally, the glycine cleavage system catalyzes the degradation of glycine. The H protein shuttles the methylamine group of glycine from the P protein to the T protein. In Bifidobacterium longum (strain NCC 2705), this protein is Glycine cleavage system H protein.